The sequence spans 430 residues: Phosphomethylpyrimidine synthase (430 aa).

Residues asparagine 68, methionine 96, tyrosine 125, histidine 164, 186–188 (SRG), 227–230 (DALR), and glutamate 266 contribute to the substrate site. Histidine 270 is a Zn(2+) binding site. Residue tyrosine 293 coordinates substrate. Histidine 334 provides a ligand contact to Zn(2+). Residues cysteine 410, cysteine 413, and cysteine 417 each coordinate [4Fe-4S] cluster.

It belongs to the ThiC family. The cofactor is [4Fe-4S] cluster.

It catalyses the reaction 5-amino-1-(5-phospho-beta-D-ribosyl)imidazole + S-adenosyl-L-methionine = 4-amino-2-methyl-5-(phosphooxymethyl)pyrimidine + CO + 5'-deoxyadenosine + formate + L-methionine + 3 H(+). The protein operates within cofactor biosynthesis; thiamine diphosphate biosynthesis. Catalyzes the synthesis of the hydroxymethylpyrimidine phosphate (HMP-P) moiety of thiamine from aminoimidazole ribotide (AIR) in a radical S-adenosyl-L-methionine (SAM)-dependent reaction. The chain is Phosphomethylpyrimidine synthase from Pyrobaculum aerophilum (strain ATCC 51768 / DSM 7523 / JCM 9630 / CIP 104966 / NBRC 100827 / IM2).